The primary structure comprises 73 residues: Small ribosomal subunit protein eS27 (73 aa).

Residues cysteine 28, cysteine 31, cysteine 47, and cysteine 50 each coordinate Zn(2+). Residues 28 to 50 (CVDCGNEQIIFGNASTEVKCHIC) form a C4-type zinc finger.

This sequence belongs to the eukaryotic ribosomal protein eS27 family. In terms of assembly, part of the 30S ribosomal subunit. Zn(2+) serves as cofactor.

The sequence is that of Small ribosomal subunit protein eS27 from Methanopyrus kandleri (strain AV19 / DSM 6324 / JCM 9639 / NBRC 100938).